The primary structure comprises 493 residues: Rho guanine nucleotide exchange factor 9 (493 aa).

One can recognise an SH3 domain in the interval 15–74 (DSIVSAEAVWDHVTMANRGVAFKAGDVIKVLDASNKDWWWGQIDDEEGWFPASFVRLWVN). Positions 107 to 117 (RDQMRANVINE) are interaction with GPHN. One can recognise a DH domain in the interval 110–294 (MRANVINEIM…RNVTQQINER (185 aa)). One can recognise a PH domain in the interval 325–432 (ELIYTGEMAW…WLRAFREERK (108 aa)). Residues 453–473 (AMTVRKASKQKGRVGEEENQS) are disordered.

Interacts with GPHN. In terms of tissue distribution, detected in brain, throughout the gray matter. Detected at low levels in heart and skeletal muscle.

The protein resides in the cytoplasm. It localises to the postsynaptic density. Its function is as follows. Acts as a guanine nucleotide exchange factor (GEF) for CDC42. Promotes formation of GPHN clusters. This is Rho guanine nucleotide exchange factor 9 (Arhgef9) from Rattus norvegicus (Rat).